Here is a 566-residue protein sequence, read N- to C-terminus: Sorting nexin lst-4 (566 aa).

The SH3 domain occupies 1–61; it reads MAQVKAEYDF…PESYVTPYQA (61 aa). Positions 59–179 are disordered; sequence YQASRPPPVL…DRGSNKVNKN (121 aa). The segment covering 63-77 has biased composition (pro residues); the sequence is RPPPVLPPPLPPTSS. The segment covering 127–140 has biased composition (acidic residues); sequence DDFDDEWTDEDDEQ. A compositionally biased stretch (polar residues) spans 143–154; the sequence is TRPNVQSSIGSN. The span at 155 to 173 shows a compositional bias: basic and acidic residues; sequence SRRDLSRSHSEHGGPDRGS. The region spanning 227–339 is the PX domain; the sequence is YTCIVDKPKK…HFISCTDEKD (113 aa). Residues 362–566 form the BAR domain; sequence TVPHQPLDPN…KLTSLAARYD (205 aa).

It belongs to the sorting nexin family. As to quaternary structure, homodimer. Isoform d interacts (via SH3 domain) with dyn-1. In terms of tissue distribution, expressed in vulval precursor cells (VPCs) and apoptotic germ cells. Colocalizes with actin, dyn-1 and rab-5 in early phagosomes.

Its subcellular location is the cytoplasm. The protein localises to the cytoplasmic vesicle. It is found in the phagosome membrane. Functionally, involved in the signaling of vulval development by acting as a negative regulator of epidermal growth factor receptor (EGFR) signaling. Aids in phagosomal membrane tubule formation which is required for phagosomal fusion with endosomes and lysosomes. Also recruits rab-7 to phagosomes by an interaction with dyn-1. These are events leading to phagosome maturation which is a step in apoptotic cell corpse clearance. Binds phosphatidylinositol-3,4,5-trisphosphate. The polypeptide is Sorting nexin lst-4 (Caenorhabditis elegans).